Here is a 1834-residue protein sequence, read N- to C-terminus: Non-reducing polyketide synthase spyA (1834 aa).

Residues 91 to 255 (LAPLTVIIHL…TRIPIYGRYH (165 aa)) form the Starter acyltransferase (SAT) domain. A Ketosynthase family 3 (KS3) domain is found at 385–801 (EHSIAVIGAA…GNNTAVIVCE (417 aa)). Catalysis depends on for beta-ketoacyl synthase activity residues cysteine 551, histidine 687, and histidine 724. Positions 919 to 1164 (YEGSSLLRSH…KELGPCTWVE (246 aa)) constitute a Malonyl-CoA:ACP transacylase (MAT) domain. The tract at residues 1269–1398 (PLVYLLRDEG…GVISLRQERH (130 aa)) is N-terminal hotdog fold. The PKS/mFAS DH domain occupies 1269–1577 (PLVYLLRDEG…FVRITASSLN (309 aa)). The product template (PT) domain stretch occupies residues 1269 to 1577 (PLVYLLRDEG…FVRITASSLN (309 aa)). The interval 1428 to 1577 (AISLKEGIIY…FVRITASSLN (150 aa)) is C-terminal hotdog fold. Positions 1616–1690 (SDILSILSHL…TLCQEIQTQR (75 aa)) constitute a Carrier 1 domain. Serine 1650 is subject to O-(pantetheine 4'-phosphoryl)serine. Residues 1693–1720 (RLARASRTTTATRNTSFSLGRRTSSTES) are disordered. The segment covering 1697-1710 (ASRTTTATRNTSFS) has biased composition (low complexity). The region spanning 1731 to 1807 (SKSAAVLAQL…GLARLILASE (77 aa)) is the Carrier 2 domain. The residue at position 1767 (serine 1767) is an O-(pantetheine 4'-phosphoryl)serine.

Requires pantetheine 4'-phosphate as cofactor.

It carries out the reaction 2 malonyl-CoA + acetyl-CoA + 2 H(+) = triacetate lactone + 2 CO2 + 3 CoA. It functions in the pathway secondary metabolite biosynthesis; terpenoid biosynthesis. Functionally, non-reducing polyketide synthase; part of the gene cluster that mediates the biosynthesis of meroterpenoids called sartorypyrones. The biosynthesis of sartorypyrones begins with the production of triacetic acid lactone (TAL) by the NR-PKS spyA using one molecule of acetyl-CoA and two molecules of malonyl-CoA. As spyA lacks a thioesterase (TE) domain, TAL is likely generated through self-release from spyA by spontaneous lactonization. After production of TAL, the prenyltransferase spyF then conjugates geranylgeranyl pyrophosphate (GGPP) to TAL to form geranylgeranyl-triacetate lactone, for which the pathway-specific geranylgeranyl pyrophosphate synthase (GGPS) spyE is required to provide GGPP. Subsequently, geranylgeranyl-triacetate lactone is epoxidized at the terminal olein by the FAD-dependent monooxygenase spyC, followed by cyclization of the terpenoid component catalyzed by the terpene cyclase spyD to produce both the bicyclic sartorypyrone F and the monocyclic sartorypyrone D. Finally, the last step of the biosynthesis involves the acetylation of the meroterpenoids sartorypyrones D and F by the acetyltransferase SpyB to produce sartorypyrones A and G, respectively. The chain is Non-reducing polyketide synthase spyA from Aspergillus fumigatus (strain ATCC MYA-4609 / CBS 101355 / FGSC A1100 / Af293) (Neosartorya fumigata).